The sequence spans 202 residues: Imidazole glycerol phosphate synthase subunit HisH 2 (202 aa).

The region spanning 1–202 (MIAIIDYGMG…KLMENFIKQA (202 aa)) is the Glutamine amidotransferase type-1 domain. The active-site Nucleophile is the Cys80. Residues His183 and Glu185 contribute to the active site.

As to quaternary structure, heterodimer of HisH and HisF.

It localises to the cytoplasm. It carries out the reaction 5-[(5-phospho-1-deoxy-D-ribulos-1-ylimino)methylamino]-1-(5-phospho-beta-D-ribosyl)imidazole-4-carboxamide + L-glutamine = D-erythro-1-(imidazol-4-yl)glycerol 3-phosphate + 5-amino-1-(5-phospho-beta-D-ribosyl)imidazole-4-carboxamide + L-glutamate + H(+). It catalyses the reaction L-glutamine + H2O = L-glutamate + NH4(+). Its pathway is amino-acid biosynthesis; L-histidine biosynthesis; L-histidine from 5-phospho-alpha-D-ribose 1-diphosphate: step 5/9. Its function is as follows. IGPS catalyzes the conversion of PRFAR and glutamine to IGP, AICAR and glutamate. The HisH subunit provides the glutamine amidotransferase activity that produces the ammonia necessary to HisF for the synthesis of IGP and AICAR. The sequence is that of Imidazole glycerol phosphate synthase subunit HisH 2 (hisH2) from Methanococcus maripaludis (strain DSM 14266 / JCM 13030 / NBRC 101832 / S2 / LL).